A 371-amino-acid chain; its full sequence is UDP-N-acetylglucosamine--N-acetylmuramyl-(pentapeptide) pyrophosphoryl-undecaprenol N-acetylglucosamine transferase (371 aa).

Residues 10-12 (TGG), asparagine 124, arginine 165, serine 191, isoleucine 246, and glutamine 291 each bind UDP-N-acetyl-alpha-D-glucosamine.

Belongs to the glycosyltransferase 28 family. MurG subfamily.

It localises to the cell inner membrane. The catalysed reaction is di-trans,octa-cis-undecaprenyl diphospho-N-acetyl-alpha-D-muramoyl-L-alanyl-D-glutamyl-meso-2,6-diaminopimeloyl-D-alanyl-D-alanine + UDP-N-acetyl-alpha-D-glucosamine = di-trans,octa-cis-undecaprenyl diphospho-[N-acetyl-alpha-D-glucosaminyl-(1-&gt;4)]-N-acetyl-alpha-D-muramoyl-L-alanyl-D-glutamyl-meso-2,6-diaminopimeloyl-D-alanyl-D-alanine + UDP + H(+). The protein operates within cell wall biogenesis; peptidoglycan biosynthesis. In terms of biological role, cell wall formation. Catalyzes the transfer of a GlcNAc subunit on undecaprenyl-pyrophosphoryl-MurNAc-pentapeptide (lipid intermediate I) to form undecaprenyl-pyrophosphoryl-MurNAc-(pentapeptide)GlcNAc (lipid intermediate II). The sequence is that of UDP-N-acetylglucosamine--N-acetylmuramyl-(pentapeptide) pyrophosphoryl-undecaprenol N-acetylglucosamine transferase from Geobacter sp. (strain M21).